The sequence spans 429 residues: Formate-dependent phosphoribosylglycinamide formyltransferase (429 aa).

N(1)-(5-phospho-beta-D-ribosyl)glycinamide is bound by residues 26–27 (EL) and Glu-86. Residues Arg-118, Lys-159, 199-202 (EEHI), and Glu-207 each bind ATP. In terms of domain architecture, ATP-grasp spans 123 to 319 (ETLAREAKVP…EFGLHLRAVL (197 aa)). Residues Glu-276 and Glu-288 each coordinate Mg(2+). Residues Asp-295, Lys-375, and 382-383 (RR) each bind N(1)-(5-phospho-beta-D-ribosyl)glycinamide.

This sequence belongs to the PurK/PurT family. In terms of assembly, homodimer.

It catalyses the reaction N(1)-(5-phospho-beta-D-ribosyl)glycinamide + formate + ATP = N(2)-formyl-N(1)-(5-phospho-beta-D-ribosyl)glycinamide + ADP + phosphate + H(+). The protein operates within purine metabolism; IMP biosynthesis via de novo pathway; N(2)-formyl-N(1)-(5-phospho-D-ribosyl)glycinamide from N(1)-(5-phospho-D-ribosyl)glycinamide (formate route): step 1/1. Its function is as follows. Involved in the de novo purine biosynthesis. Catalyzes the transfer of formate to 5-phospho-ribosyl-glycinamide (GAR), producing 5-phospho-ribosyl-N-formylglycinamide (FGAR). Formate is provided by PurU via hydrolysis of 10-formyl-tetrahydrofolate. The sequence is that of Formate-dependent phosphoribosylglycinamide formyltransferase from Thermococcus kodakarensis (strain ATCC BAA-918 / JCM 12380 / KOD1) (Pyrococcus kodakaraensis (strain KOD1)).